A 497-amino-acid chain; its full sequence is MRRAVELQTVAFPETPPPSYETVMAAAPPYVPPRYLGPTEGRNSIRYSELSPLYDTTRVYLVDNKSSDIASLNYQNDHSNFLTTVVQNNDYSPIEAGTQTINFDERSRWGGDLKTILHTNMPNVNDFMFTTKFKARVMVARKTNNEGQTILEYEWAEFVLPEGNYSETMTIDLMNNAIIEHYLRVGRQHGVLESDIGVKFDTRNFRLGWDPETQLVTPGVYTNEAFHPDIVLLPGCGVDFTESRLSNILGIRKRQPFQEGFVIMYEHLEGGNIPALLDVKKYENSLQDQNTVRGDNFIALNKAARIEPVETDPKGRSYNLLPDKKNTKYRSWYLAYNYGDPEKGVRSWTLLTTPDVTGGSEQVYWSLPDMMQDPVTFRSSRQVSNYPVVAAELLPVHAKSFYNEQAVYSQLIRQSTALTRVFNRFPENQILVRPPAATITTVSENVPALTDHGTLPLRSSISGVQRVTITDARRRTCPYVYKALGIVSPRVLSSRTF.

The Cell attachment site signature appears at 293–295 (RGD).

The protein belongs to the adenoviridae penton family. Interacts (via the cell attachment site RGD) with host heterodimer ITGAV-ITGB5; this interaction promotes virus internalization. Interacts with host WWP1 and WWP2. Interacts with the fiber protein (via N-terminal tail region). Interacts with the capsid vertex protein; this interaction binds the penton base to neighboring peripentonal hexons.

The protein localises to the virion. Its subcellular location is the host nucleus. Its function is as follows. Major capsid protein that self-associates to form penton base pentamers, each in the shape of a pentagon, situated at the 12 vertices of the pseudo T=25 capsid. Involved in virus secondary attachment to host cell after initial attachment by the fiber protein. Binds host integrin heterodimer ITGAV-ITGB5 (alphaV-beta5) thereby triggering clathrin-mediated endocytosis of virions. Mediates initial virus attachment to CXADR-negative cells. Binding to integrins ITGAV-ITGB5 also seems to induce macropinocytosis uptake of the virus. As the virus enters the host cell, penton proteins are shed concomitant with virion acidification in the endosome. This chain is Penton protein, found in Human adenovirus A serotype 12 (HAdV-12).